The primary structure comprises 240 residues: Phosphoribosylaminoimidazole-succinocarboxamide synthase (240 aa).

The protein belongs to the SAICAR synthetase family.

The enzyme catalyses 5-amino-1-(5-phospho-D-ribosyl)imidazole-4-carboxylate + L-aspartate + ATP = (2S)-2-[5-amino-1-(5-phospho-beta-D-ribosyl)imidazole-4-carboxamido]succinate + ADP + phosphate + 2 H(+). Its pathway is purine metabolism; IMP biosynthesis via de novo pathway; 5-amino-1-(5-phospho-D-ribosyl)imidazole-4-carboxamide from 5-amino-1-(5-phospho-D-ribosyl)imidazole-4-carboxylate: step 1/2. The protein is Phosphoribosylaminoimidazole-succinocarboxamide synthase of Acidithiobacillus ferrooxidans (strain ATCC 23270 / DSM 14882 / CIP 104768 / NCIMB 8455) (Ferrobacillus ferrooxidans (strain ATCC 23270)).